The sequence spans 539 residues: Glucose-6-phosphate isomerase (539 aa).

Glu-349 serves as the catalytic Proton donor. Catalysis depends on residues His-380 and Lys-508. The disordered stretch occupies residues 519-539; it reads ESGASGQHDPSTAGLIQRLKR.

The protein belongs to the GPI family.

It is found in the cytoplasm. The catalysed reaction is alpha-D-glucose 6-phosphate = beta-D-fructose 6-phosphate. It participates in carbohydrate biosynthesis; gluconeogenesis. It functions in the pathway carbohydrate degradation; glycolysis; D-glyceraldehyde 3-phosphate and glycerone phosphate from D-glucose: step 2/4. Catalyzes the reversible isomerization of glucose-6-phosphate to fructose-6-phosphate. The polypeptide is Glucose-6-phosphate isomerase (Caulobacter vibrioides (strain ATCC 19089 / CIP 103742 / CB 15) (Caulobacter crescentus)).